A 476-amino-acid polypeptide reads, in one-letter code: Argininosuccinate lyase (476 aa).

Belongs to the lyase 1 family. Argininosuccinate lyase subfamily.

It is found in the cytoplasm. It carries out the reaction 2-(N(omega)-L-arginino)succinate = fumarate + L-arginine. It participates in amino-acid biosynthesis; L-arginine biosynthesis; L-arginine from L-ornithine and carbamoyl phosphate: step 3/3. In Gluconacetobacter diazotrophicus (strain ATCC 49037 / DSM 5601 / CCUG 37298 / CIP 103539 / LMG 7603 / PAl5), this protein is Argininosuccinate lyase.